Reading from the N-terminus, the 355-residue chain is MVATVVGTRVESLASSGIEAIPKEYVRPQEELTSIGNIFEEEKKENGPQVPTIDLEDLVSEDEEKRVRCHEELKRAATEWGVMQVVNHGIPIELMERVRAAGAEFFNQSVEEKEKYANDHASGNIQGYGSKLANNASGQLEWEDYFFHLVYPEDKRDMSIWPKTPSDYIPATSAYAEHLRGLATKILSALSLGLGLEEGRLEKEVGGMEELLLQMKINYYPKCPQPELALGVEAHTDVSALTFILHNMVPGLQLFYEGKWVTAKCVPDSLVMHIGDTIEILSNGKYKSILHRGLVNKEKVRISWAVFCEPPKEKIILKPLPETVSEAEPPLYPPRTFAQHIHHKLFRKTQELGAK.

Y145 and K216 together coordinate substrate. Residues 211–310 form the Fe2OG dioxygenase domain; the sequence is LLLQMKINYY…RISWAVFCEP (100 aa). 218 to 220 provides a ligand contact to 2-oxoglutarate; sequence NYY. H235 lines the Fe cation pocket. T236 lines the substrate pocket. The Fe cation site is built by D237 and H291. Residues R301 and 301–303 contribute to the 2-oxoglutarate site; that span reads RIS. Substrate is bound by residues E309 and K344.

The protein belongs to the iron/ascorbate-dependent oxidoreductase family. The cofactor is L-ascorbate. Fe(2+) serves as cofactor. In terms of tissue distribution, expressed in stems and leaves. Expressed at low levels in ovaries.

It carries out the reaction a (2R,3S,4S)-leucoanthocyanidin + 2-oxoglutarate + O2 = a 4-H-anthocyanidin with a 3-hydroxy group + succinate + CO2 + 2 H2O. It participates in pigment biosynthesis; anthocyanin biosynthesis. Involved in anthocyanin biosynthesis by catalyzing the oxidation of leucoanthocyanidins into anthocyanidins. Required for the accumulation of anthocyanin in red-fleshed kiwifruit varieties. The polypeptide is Anthocyanin synthase (Actinidia chinensis var. chinensis (Chinese soft-hair kiwi)).